An 851-amino-acid chain; its full sequence is Glutathione transporter 1 (851 aa).

Over residues 1 to 14 (MTARNSASIPTSIR) the composition is skewed to polar residues. The disordered stretch occupies residues 1–116 (MTARNSASIP…LDNETDSEVE (116 aa)). A glycan (N-linked (GlcNAc...) asparagine) is linked at asparagine 32. Residues 33-68 (LSTKTASKTSLTFRQSSSDESTSSYSGNHHNINIQH) show a composition bias toward low complexity. Residues 74–92 (FRTNSSSFSPNDYSISESP) are compositionally biased toward polar residues. N-linked (GlcNAc...) asparagine glycosylation is present at asparagine 77. Serine 93 carries the phosphoserine modification. Residues 105–134 (VQLDNETDSEVESEVEELERELEAIEDSVY) are a coiled coil. An N-linked (GlcNAc...) asparagine glycan is attached at asparagine 109. 2 helical membrane passes run 156 to 176 (TWVLTTIFVIVFAAVNQFFSL) and 179 to 199 (PALSISFIVAQLILFPLGKLL). Asparagine 256 carries N-linked (GlcNAc...) asparagine glycosylation. The next 4 helical transmembrane spans lie at 259 to 279 (WGYKILIVLTSQMLGYGFAGL), 282 to 302 (RWIVYPAAMIWPQTLVSTVLF), 333 to 353 (FFAYVMIGSFVFYWFPGFIFK), and 405 to 425 (WVICNTFGSVVLIFWIVVPIL). N-linked (GlcNAc...) asparagine glycans are attached at residues asparagine 452 and asparagine 464. 5 helical membrane-spanning segments follow: residues 480–500 (YSMSTALNFAAVTAIFTHCAL), 531–551 (APQWWYATLFIVVFGLTIFTV), 560–580 (VWALIVALLIFIVNFIPQGVL), 592–612 (IITELIGGYILPGKPLANLMI), and 642–662 (ILFFVQLFATILGGITQVAVQ). N-linked (GlcNAc...) asparagine glycosylation occurs at asparagine 691. A run of 3 helical transmembrane segments spans residues 711-731 (YYPLIFFFLIGAVAPFITWGL), 757-777 (PATGINYSSWAIVGFIFNYVI), and 791-811 (VLAAAMDSGVAVAGVVIFLCV). Asparagine 843 carries N-linked (GlcNAc...) asparagine glycosylation.

Belongs to the oligopeptide OPT transporter family.

It localises to the endoplasmic reticulum membrane. Its subcellular location is the cell membrane. High-affinity glutathione transporter which plays a role in scavenging glutathione from the extracellular environment for the maintenance of sulfur homeostasis. The sequence is that of Glutathione transporter 1 (pgt1) from Schizosaccharomyces pombe (strain 972 / ATCC 24843) (Fission yeast).